A 333-amino-acid polypeptide reads, in one-letter code: tRNA N6-adenosine threonylcarbamoyltransferase (333 aa).

Fe cation-binding residues include histidine 118 and histidine 122. Substrate-binding positions include 140–144, aspartate 173, glycine 186, and asparagine 274; that span reads VVSGG. Aspartate 298 provides a ligand contact to Fe cation.

The protein belongs to the KAE1 / TsaD family. Requires Fe(2+) as cofactor.

It is found in the cytoplasm. It carries out the reaction L-threonylcarbamoyladenylate + adenosine(37) in tRNA = N(6)-L-threonylcarbamoyladenosine(37) in tRNA + AMP + H(+). Its function is as follows. Required for the formation of a threonylcarbamoyl group on adenosine at position 37 (t(6)A37) in tRNAs that read codons beginning with adenine. Is involved in the transfer of the threonylcarbamoyl moiety of threonylcarbamoyl-AMP (TC-AMP) to the N6 group of A37, together with TsaE and TsaB. TsaD likely plays a direct catalytic role in this reaction. This Deinococcus geothermalis (strain DSM 11300 / CIP 105573 / AG-3a) protein is tRNA N6-adenosine threonylcarbamoyltransferase.